We begin with the raw amino-acid sequence, 455 residues long: La-related protein 6C (455 aa).

A compositionally biased stretch (basic and acidic residues) spans 1-20 (MAQMQREEVESVTTEKKRLD). The interval 1–29 (MAQMQREEVESVTTEKKRLDGGGGSSGAQ) is disordered. An HTH La-type RNA-binding domain is found at 138-229 (NLLSDDLRLK…KRTSQFTDRD (92 aa)). One can recognise an RRM domain in the interval 236-324 (RTVVAENLPD…KGLRVRLLLR (89 aa)). 2 disordered regions span residues 348 to 396 (SYES…YAVG) and 414 to 455 (SLGS…PNNL).

Its subcellular location is the nucleus. Transcriptional regulator. The polypeptide is La-related protein 6C (LARP6C) (Arabidopsis thaliana (Mouse-ear cress)).